Reading from the N-terminus, the 104-residue chain is Small ribosomal subunit protein uS10 (104 aa).

It belongs to the universal ribosomal protein uS10 family. In terms of assembly, part of the 30S ribosomal subunit.

Its function is as follows. Involved in the binding of tRNA to the ribosomes. The chain is Small ribosomal subunit protein uS10 from Ruegeria pomeroyi (strain ATCC 700808 / DSM 15171 / DSS-3) (Silicibacter pomeroyi).